The following is a 527-amino-acid chain: DNA polymerase epsilon subunit 2 (527 aa).

Belongs to the DNA polymerase epsilon subunit B family. In terms of assembly, component of the DNA polymerase epsilon complex consisting of four subunits: the catalytic subunit POLE and the accessory subunits POLE2, POLE3 and POLE4.

It is found in the nucleus. Functionally, accessory component of the DNA polymerase epsilon complex. Participates in DNA repair and in chromosomal DNA replication. The polypeptide is DNA polymerase epsilon subunit 2 (POLE2) (Bos taurus (Bovine)).